The chain runs to 287 residues: Pantothenate synthetase (287 aa).

Position 37–44 (37–44 (MGALHEGH)) interacts with ATP. The active-site Proton donor is the His44. Residue Gln68 participates in (R)-pantoate binding. Gln68 contributes to the beta-alanine binding site. 154–157 (GQKD) is an ATP binding site. Residue Gln160 participates in (R)-pantoate binding. Residues Val183 and 191–194 (LSSR) each bind ATP.

The protein belongs to the pantothenate synthetase family. In terms of assembly, homodimer.

The protein localises to the cytoplasm. The catalysed reaction is (R)-pantoate + beta-alanine + ATP = (R)-pantothenate + AMP + diphosphate + H(+). It functions in the pathway cofactor biosynthesis; (R)-pantothenate biosynthesis; (R)-pantothenate from (R)-pantoate and beta-alanine: step 1/1. Catalyzes the condensation of pantoate with beta-alanine in an ATP-dependent reaction via a pantoyl-adenylate intermediate. This is Pantothenate synthetase from Leifsonia xyli subsp. xyli (strain CTCB07).